The sequence spans 135 residues: Membrane-anchored ubiquitin-fold protein 4 (135 aa).

The tract at residues 1–20 is disordered; the sequence is MAEKEEGKVAAEGGAEAEAD. One can recognise a Ubiquitin-like domain in the interval 23 to 92; the sequence is VEVKFRLFDG…NDKNIAQCRA (70 aa). The residue at position 132 (Cys132) is a Cysteine methyl ester. Cys132 is lipidated: S-geranylgeranyl cysteine. The propeptide at 133-135 is removed in mature form; it reads TIL.

The protein localises to the cell membrane. May serve as docking site to facilitate the association of other proteins to the plasma membrane. The sequence is that of Membrane-anchored ubiquitin-fold protein 4 (MUB4) from Oryza sativa subsp. japonica (Rice).